Reading from the N-terminus, the 468-residue chain is BTB/POZ domain-containing protein 17 (468 aa).

The N-terminal stretch at 1–16 is a signal peptide; sequence MRRFCVVPLLLVLVEA. Residues 51-120 form the BTB domain; sequence TDTILRIRTA…FYCGEISVNL (70 aa). Residues 159-259 enclose the BACK domain; the sequence is VVSWYHYALR…ISPSQLFQIQ (101 aa).

Its subcellular location is the secreted. The sequence is that of BTB/POZ domain-containing protein 17 (btbd17) from Xenopus tropicalis (Western clawed frog).